The sequence spans 487 residues: PPE family protein PPE10 (487 aa).

The span at 398–424 (APVGGLDSGNPNPGSGSAAAGSGANPG) shows a compositional bias: low complexity. The interval 398–487 (APVGGLDSGN…PRIGQPVGSE (90 aa)) is disordered. Residues 428–446 (PGTSYPSFVNSGSNDSGLR) are compositionally biased toward polar residues.

It belongs to the mycobacterial PPE family.

The protein localises to the secreted. Functionally, plays a major role in the integrity and stability of the capsule. The chain is PPE family protein PPE10 (PPE10) from Mycobacterium tuberculosis (strain CDC 1551 / Oshkosh).